A 535-amino-acid polypeptide reads, in one-letter code: tRNA-2-methylthio-N(6)-dimethylallyladenosine synthase (535 aa).

The 116-residue stretch at 24 to 139 (RTYEVRTFGC…LPRLLERARH (116 aa)) folds into the MTTase N-terminal domain. [4Fe-4S] cluster contacts are provided by Cys-33, Cys-68, Cys-102, Cys-176, Cys-180, and Cys-183. The 231-residue stretch at 162–392 (RDSSFSGWVS…IALQERISLE (231 aa)) folds into the Radical SAM core domain. Positions 395-465 (EKLIGRDVEL…PHYLIADAAG (71 aa)) constitute a TRAM domain. A disordered region spans residues 512-535 (RTREPLTSPGVGTMPLYDPTDGQR).

The protein belongs to the methylthiotransferase family. MiaB subfamily. In terms of assembly, monomer. [4Fe-4S] cluster serves as cofactor.

Its subcellular location is the cytoplasm. It catalyses the reaction N(6)-dimethylallyladenosine(37) in tRNA + (sulfur carrier)-SH + AH2 + 2 S-adenosyl-L-methionine = 2-methylsulfanyl-N(6)-dimethylallyladenosine(37) in tRNA + (sulfur carrier)-H + 5'-deoxyadenosine + L-methionine + A + S-adenosyl-L-homocysteine + 2 H(+). Its function is as follows. Catalyzes the methylthiolation of N6-(dimethylallyl)adenosine (i(6)A), leading to the formation of 2-methylthio-N6-(dimethylallyl)adenosine (ms(2)i(6)A) at position 37 in tRNAs that read codons beginning with uridine. In Leifsonia xyli subsp. xyli (strain CTCB07), this protein is tRNA-2-methylthio-N(6)-dimethylallyladenosine synthase.